A 185-amino-acid polypeptide reads, in one-letter code: MKKNKLSIKTIVAIGIGSAVFMILGRFGSLPTGIPNTNIETAYAFLSLMALLYGPLAGFLIGFIGHALKDIVFFGSPWISWVFASGIVGLIIGFGARFIKINQGVFKLKQIFMFNLIQIIANGVAWFLVAPTLDILIYSEPLNKVYLQGVIGGISNMITVGVLGTVLISNYSKTRIKKGSLRKEY.

The next 5 membrane-spanning stretches (helical) occupy residues 11 to 31 (IVAI…GSLP), 44 to 64 (AFLS…IGFI), 71 to 91 (IVFF…VGLI), 111 to 131 (IFMF…LVAP), and 149 to 169 (GVIG…VLIS).

This sequence belongs to the UPF0397 family.

It localises to the cell membrane. In Clostridium perfringens (strain SM101 / Type A), this protein is UPF0397 protein CPR_1556.